Consider the following 264-residue polypeptide: Cyclin-P1-1 (264 aa).

The segment at 1-25 (MDAAAAAGGEMSRQKATASAPPPPE) is disordered.

Belongs to the cyclin family. Cyclin U/P subfamily.

The chain is Cyclin-P1-1 (CYCP1-1) from Oryza sativa subsp. japonica (Rice).